Here is a 121-residue protein sequence, read N- to C-terminus: Large ribosomal subunit protein uL18 (121 aa).

Belongs to the universal ribosomal protein uL18 family. Part of the 50S ribosomal subunit; part of the 5S rRNA/L5/L18/L25 subcomplex. Contacts the 5S and 23S rRNAs.

Its function is as follows. This is one of the proteins that bind and probably mediate the attachment of the 5S RNA into the large ribosomal subunit, where it forms part of the central protuberance. The protein is Large ribosomal subunit protein uL18 of Burkholderia multivorans (strain ATCC 17616 / 249).